A 293-amino-acid chain; its full sequence is Elongation factor Ts (293 aa).

The tract at residues Thr80–Val83 is involved in Mg(2+) ion dislocation from EF-Tu.

The protein belongs to the EF-Ts family.

Its subcellular location is the cytoplasm. Functionally, associates with the EF-Tu.GDP complex and induces the exchange of GDP to GTP. It remains bound to the aminoacyl-tRNA.EF-Tu.GTP complex up to the GTP hydrolysis stage on the ribosome. This Aeromonas hydrophila subsp. hydrophila (strain ATCC 7966 / DSM 30187 / BCRC 13018 / CCUG 14551 / JCM 1027 / KCTC 2358 / NCIMB 9240 / NCTC 8049) protein is Elongation factor Ts.